We begin with the raw amino-acid sequence, 365 residues long: DNA N6-methyl methyltransferase (365 aa).

It belongs to the MT-A70-like family.

The enzyme catalyses a 2'-deoxyadenosine in DNA + S-adenosyl-L-methionine = an N(6)-methyl-2'-deoxyadenosine in DNA + S-adenosyl-L-homocysteine + H(+). Functionally, methylates DNA on the 6th position of adenine (N(6)-methyladenosine). N(6)-methyladenosine (m6A) DNA is involved in epigenetic transgenerational inheritance. The protein is DNA N6-methyl methyltransferase of Caenorhabditis elegans.